A 492-amino-acid chain; its full sequence is Fascin-2 (492 aa).

The protein belongs to the fascin family. As to expression, localized specifically in the outer and inner segments of the photoreceptor cells in the retina.

The protein resides in the cytoplasm. It is found in the cytoskeleton. Its subcellular location is the cell projection. It localises to the stereocilium. Its function is as follows. Acts as an actin bundling protein. May play a pivotal role in photoreceptor cell-specific events, such as disk morphogenesis. This is Fascin-2 (FSCN2) from Homo sapiens (Human).